The primary structure comprises 744 residues: Junctophilin-3 (744 aa).

The Cytoplasmic segment spans residues Met-1–Ile-723. MORN repeat units follow at residues Tyr-15–Gly-37, Tyr-39–Thr-60, Tyr-61–Val-82, Tyr-83–Ala-105, Tyr-107–Thr-129, and Tyr-130–Met-152. A disordered region spans residues Ser-230–Thr-252. Residues Lys-231 to Phe-244 are compositionally biased toward low complexity. MORN repeat units follow at residues Tyr-288 to Lys-310 and Tyr-311 to Lys-333. Ser-440 carries the post-translational modification Phosphoserine. At Thr-451 the chain carries Phosphothreonine. Disordered stretches follow at residues Thr-451–Pro-603 and Cys-624–Arg-677. Ser-457 carries the post-translational modification Phosphoserine. Phosphothreonine is present on Thr-471. Residues Ser-475 and Ser-506 each carry the phosphoserine modification. Phosphoserine occurs at positions 699 and 706. The chain crosses the membrane as a helical; Anchor for type IV membrane protein span at residues Leu-724–Ile-744.

It belongs to the junctophilin family. In terms of tissue distribution, specifically expressed in brain. Highest levels in the olfactory tubercle, caudate putamen, nucleus accumbens, hippocampal formation, piriform cortex and cerebellar cortex. Expressed in disctete neurons sites. In hippocampal formation, expressed in dendrites of hippocampal pyramidal and denate granule cells. In cerebellum, it is highly expressed in Purkinge cells, while it is weakly expressed in granular cells.

It is found in the cell membrane. Its subcellular location is the endoplasmic reticulum membrane. In terms of biological role, junctophilins contribute to the formation of junctional membrane complexes (JMCs) which link the plasma membrane with the endoplasmic or sarcoplasmic reticulum in excitable cells. Provides a structural foundation for functional cross-talk between the cell surface and intracellular calcium release channels. JPH3 is brain-specific and appears to have an active role in certain neurons involved in motor coordination and memory. This is Junctophilin-3 (Jph3) from Mus musculus (Mouse).